Consider the following 517-residue polypeptide: Maturase K (517 aa).

The protein belongs to the intron maturase 2 family. MatK subfamily.

It is found in the plastid. The protein resides in the chloroplast. Usually encoded in the trnK tRNA gene intron. Probably assists in splicing its own and other chloroplast group II introns. The sequence is that of Maturase K from Palhinhaea cernua (Nodding clubmoss).